Consider the following 62-residue polypeptide: MSYCFSSTVFPGCYWGSYGYPLGYSVGCGYGSTYSPVGYGFGYGYNGSGAFGCRRFWPFALY.

The 12 X 2 AA repeats of G-[YCGS] stretch occupies residues 12-53; that stretch reads GCYWGSYGYPLGYSVGCGYGSTYSPVGYGFGYGYNGSGAFGC.

The protein belongs to the KRTAP type 8 family. Interacts with wool keratins. As to expression, wool.

Its function is as follows. In the wool cortex, wool keratin intermediate filaments are embedded in an interfilamentous matrix, consisting of hair keratin-associated proteins (KRTAP), which are essential for the formation of a rigid and resistant wool shaft through their extensive disulfide bond cross-linking with abundant cysteine residues of wool keratins. The matrix proteins include the high-sulfur and high-glycine-tyrosine keratins. The protein is Keratin-associated protein 8-1 (KRTAP8-1) of Ovis aries (Sheep).